A 651-amino-acid chain; its full sequence is Apical membrane antigen 1-like protein (651 aa).

Residues 1 to 41 form the signal peptide; sequence MPTESRSILARAEETRCRHLSRLLRAGLVFLLCDVLTSCLA. Residues 42-81 constitute a propeptide, removed in mature form; sequence TPELQNTVIRSSKAHHLQLLFSSRSTPAVKFPLDATLSAP. Residues 42 to 570 are Extracellular-facing; the sequence is TPELQNTVIR…VEKEGSGGNT (529 aa). 7 disulfide bridges follow: cysteine 141/cysteine 309, cysteine 215/cysteine 248, cysteine 264/cysteine 277, cysteine 327/cysteine 417, cysteine 347/cysteine 408, cysteine 441/cysteine 463, and cysteine 453/cysteine 475. N-linked (GlcNAc...) asparagine glycosylation is present at asparagine 230. The 1; approximate repeat unit spans residues 483–486; sequence PPVK. Residues 483 to 531 are 12 x 4 AA approximate tandem-repeats of P-P-V-E; that stretch reads PPVKPPVEPPVEPPVEPPVEPPVEPPVEPPVEPPVEPPVEPPVVEPPTE. Residues 483 to 547 are compositionally biased toward pro residues; sequence PPVKPPVEPP…EPPVVLPPTP (65 aa). The segment at 483 to 567 is disordered; it reads PPVKPPVEPP…DETVEKEGSG (85 aa). 9 consecutive repeat copies span residues 487 to 490, 491 to 494, 495 to 498, 499 to 502, 503 to 506, 507 to 510, 511 to 514, 515 to 518, and 519 to 522. The stretch at 523-527 is one 11; approximate repeat; the sequence is PPVVE. A 12; approximate repeat occupies 528–531; the sequence is PPTE. Residues 571-591 form a helical membrane-spanning segment; the sequence is ALIAGSVLGMLIILALVGTCV. Residues 592 to 651 are Cytoplasmic-facing; the sequence is GFYYRKRPLPPTERPTVEASGGREVEGPSDVAVPPDHSWWGEGEHETESLLGSRAVDAEF. Residues 598-651 form a disordered region; it reads RPLPPTERPTVEASGGREVEGPSDVAVPPDHSWWGEGEHETESLLGSRAVDAEF.

It belongs to the apicomplexan parasites AMA1 family. Proteolytically cleaved within its transmembrane domain, releasing a soluble form from the cell surface.

The protein resides in the cell membrane. The protein localises to the secreted. In terms of biological role, may play a role in host cell invasion. The polypeptide is Apical membrane antigen 1-like protein (Toxoplasma gondii (strain ATCC 50861 / VEG)).